A 578-amino-acid chain; its full sequence is MVFAAPCWVPPLPSDLPDSTTLEEFIFCQVKDSQTRSELDRSILICGTQGKEYTVQESMERTGRLAQGLSAWLDWPQKPSEEDWKVAAIFNINCVEFFSISHAIHRLGGTVSAINASSTADELEAQLRLSNAQAIFTCNTLLKIAMKASQKVGIPLANIFLTDAPGSYRPDDVYPFQEIDNIVRTARSSLPLLQLGRGQGSSTPAYICFSSGTSGAQKPVLLSHQGIIANIVQINTFEKFRQKGPNVSLCILPLAHSYGLVCVAYNALYRGDRLAVLPSSDVEDLLSIVEKLRINTLYLVPTLLSRILSGGKAGGHDLSCVKEVYTGGAPLHPMLGEHILRHHPTWKTKQCYGATEAGTAVSVTSDCDLWPGSVGCLLPGVQAKIIRSDGSETTKHDESGELWVSSPSLAIGYLSNPLATEATFTVDNTGRTWLRTGDEAKICLSPNGNEHLFIVDRIKDIIKVKGFQVAPVELEQLLLSNDFVEEVAITSRQDKRGEERPQAFVVRTHEGLKEPQDAVSESLQALVKARKARYKWLHPHVIFVDSLPKTTSGKIMRRALRNMCPANSEVNGRLSSKI.

Residues 210–218 (SSGTSGAQK), 350–355 (QCYGAT), Asp438, Arg457, and Lys554 contribute to the ATP site. An SBD1 region spans residues 281-350 (DVEDLLSIVE…RHHPTWKTKQ (70 aa)). Residues 351-413 (CYGATEAGTA…VSSPSLAIGY (63 aa)) are SBD2. The Peroxisomal targeting signal type 1 motif lies at 576–578 (SKI).

The protein localises to the peroxisome. Its pathway is mycotoxin biosynthesis. Acyl-CoA ligase; part of the gene clusters that mediate the biosynthesis of the host-selective toxins (HSTs) AK-toxins responsible for Japanese pear black spot disease by the Japanese pear pathotype. AK-toxins are esters of 9,10-epoxy 8-hydroxy 9-methyldecatrienoic acid (EDA). On cellular level, AK-toxins affect plasma membrane of susceptible cells and cause a sudden increase in loss of K(+) after a few minutes of toxin treatment. The acyl-CoA ligase AKT1, the hydrolase AKT2 and enoyl-CoA hydratase AKT3 are all involved in the biosynthesis of the AK-, AF- and ACT-toxin common 9,10-epoxy-8-hydroxy-9-methyl-decatrienoic acid (EDA) structural moiety. Part of the EDA biosynthesis occurs in the peroxisome since these 3 enzymes are localized in peroxisomes. The exact roles of the 3 enzymes, as well as of additional AK-toxin clusters enzymes, including AKT4, AKT6 and AKTS1, have still to be elucidated. The Cytochrome P450 monooxygenase AKT7 on the other side functions to limit production of EDA and AK-toxin, probably via the catalysis of a side reaction of EDA or its precursor. This Alternaria alternata (Alternaria rot fungus) protein is Acyl-CoA ligase AKT1.